A 284-amino-acid chain; its full sequence is Tropomyosin-1 (284 aa).

Disordered regions lie at residues 1-26 (MDAI…DTCE) and 96-124 (EEDL…DENN). Residues 1–276 (MDAIKKKMQA…YKSLADEMDS (276 aa)) adopt a coiled-coil conformation. Positions 12-26 (KLEKDNAMDKADTCE) are enriched in basic and acidic residues. Positions 107 to 121 (GTAQQKLLEAQQSAD) are enriched in polar residues.

This sequence belongs to the tropomyosin family. In terms of assembly, homodimer.

Its function is as follows. Tropomyosin, in association with the troponin complex, plays a central role in the calcium dependent regulation of muscle contraction. In Bombyx mori (Silk moth), this protein is Tropomyosin-1.